A 287-amino-acid polypeptide reads, in one-letter code: CRISPR-associated endoribonuclease Cas6 1 (287 aa).

It belongs to the CRISPR-associated endoribonuclease Cas6 family. As to quaternary structure, part of the aCascade ribonucleoprotein complex, minimally composed of Csa2 and Cas5a, which binds crRNA. Other possible components of aCascade in strain P1 are Cas6b (SSO1437) and Csa5 (SSO1443), while SSO1399, Cas5b (SSO1400) and SSO1401 have sometimes been seen weakly associated. Csa2 is probably the major RNA-binding subunit. The Csa2-Cas5a-crRNA complex also binds target DNA homologous to crRNA, probably forming an R-loop. Purified aCascade forms a filament about 6 nm in width.

Its function is as follows. CRISPR (clustered regularly interspaced short palindromic repeat) is an adaptive immune system that provides protection against mobile genetic elements (viruses, transposable elements and conjugative plasmids). CRISPR clusters contain spacers, sequences complementary to antecedent mobile elements, and target invading nucleic acids. CRISPR clusters are transcribed and processed into CRISPR RNA (crRNA). The protein is CRISPR-associated endoribonuclease Cas6 1 (cas6a) of Saccharolobus solfataricus (strain ATCC 35092 / DSM 1617 / JCM 11322 / P2) (Sulfolobus solfataricus).